The chain runs to 434 residues: Nicotinate phosphoribosyltransferase (434 aa).

H242 is subject to Phosphohistidine; by autocatalysis.

This sequence belongs to the NAPRTase family. In terms of processing, transiently phosphorylated on a His residue during the reaction cycle. Phosphorylation strongly increases the affinity for substrates and increases the rate of nicotinate D-ribonucleotide production. Dephosphorylation regenerates the low-affinity form of the enzyme, leading to product release.

The catalysed reaction is nicotinate + 5-phospho-alpha-D-ribose 1-diphosphate + ATP + H2O = nicotinate beta-D-ribonucleotide + ADP + phosphate + diphosphate. It functions in the pathway cofactor biosynthesis; NAD(+) biosynthesis; nicotinate D-ribonucleotide from nicotinate: step 1/1. Functionally, catalyzes the synthesis of beta-nicotinate D-ribonucleotide from nicotinate and 5-phospho-D-ribose 1-phosphate at the expense of ATP. The sequence is that of Nicotinate phosphoribosyltransferase from Sinorhizobium medicae (strain WSM419) (Ensifer medicae).